Here is a 433-residue protein sequence, read N- to C-terminus: Transcription factor elt-2 (433 aa).

2 disordered regions span residues 1–47 and 194–235; these read MDNN…ELPR and GQPP…RQGL. The span at 27–43 shows a compositional bias: polar residues; it reads PTQNMDPPEQNNESQLS. Positions 211–234 are enriched in low complexity; it reads AKQSSKKSSSSNRGSNGSASRRQG. The GATA-type zinc finger occupies 237-261; sequence CSNCNGTNTTLWRRNAEGDPVCNAC. The tract at residues 275-332 is disordered; it reads SMKKEGALQTRKRKSKSGDSSTPSTSRARERKFERASSSTEKAQRSSNRRAGSAKADR. Polar residues predominate over residues 310 to 324; sequence ASSSTEKAQRSSNRR.

In terms of assembly, interacts with lag-1. Interacts with pha-4. Interacts with rpt-6. Post-translationally, may be ubiquitinated in response to infection by B.pseudomallei. As to expression, expressed in the intestine.

The protein resides in the nucleus. Its function is as follows. Transcriptional activator that binds to the consensus sequence 5'-[AT]GATA[AG]-3'. Predominantly directs the transcription of intestinal genes such as ges-1, cpr-6, pho-1, ftn-1, vit-2 and lev-11, and itself. Required for gut-specific differentiation, specifically acting with the GATA region-binding transcription factor elt-7 to control normal gene expression and promote normal formation of the intestine. Regulates intestinal gene expression in response to hypoxia to promote longevity. Modulation of longevity may, in part, be the result of regulation of expression of daf-16 isoforms d and f in the intestine. Regulates tissue specific gene expression at basal levels and in response to bacterial infection in the intestine to control innate immunity. Plays a role in the induction of metal-responsive genes, activating gene expression from zinc-activated promoters and iron-dependent promoters and enhancers. May regulate the expression of genes that control sensitivity to oxidative stress, in a mab-3-dependent manner, and osmotic stress, in conjunction with the GATA region-binding transcription factor elt-3. May play a role in sphingolipid signaling by regulating the expression of the sphingosine-1-phosphate degrading enzyme, sphingosine-1-phosphate lyase. May act with the Notch signaling pathway to promote endodermal gene expression. Has a protective role in response to infection by Gram-negative bacteria such as S.enterica, E.coli, P.aeruginosa and B.pseudomallei, Gram-positive bacterium E.faecalis and fungal pathogen C.neoformans. An association with the 26S proteasome regulatory subunit rpt-6, in part, controls gene expression in response to infection by P.aeruginosa. Regulates gene expression during the recovery phase following a bacterial infection. May act with p38-activated transcription factors to control p38 gene induction in response to bacterial infection. Controls lysosome formation in the intestine by controlling lysosomal gene expression. This chain is Transcription factor elt-2, found in Caenorhabditis elegans.